The chain runs to 998 residues: Bifunctional glutamine synthetase adenylyltransferase/adenylyl-removing enzyme (998 aa).

The adenylyl removase stretch occupies residues 1-487 (MVVTKPATQR…LHAKLFYQPL (487 aa)). Positions 492-998 (GPAGLEIRHG…KAVVCKVFGS (507 aa)) are adenylyl transferase.

The protein belongs to the GlnE family. The cofactor is Mg(2+).

The enzyme catalyses [glutamine synthetase]-O(4)-(5'-adenylyl)-L-tyrosine + phosphate = [glutamine synthetase]-L-tyrosine + ADP. It carries out the reaction [glutamine synthetase]-L-tyrosine + ATP = [glutamine synthetase]-O(4)-(5'-adenylyl)-L-tyrosine + diphosphate. Its function is as follows. Involved in the regulation of glutamine synthetase GlnA, a key enzyme in the process to assimilate ammonia. When cellular nitrogen levels are high, the C-terminal adenylyl transferase (AT) inactivates GlnA by covalent transfer of an adenylyl group from ATP to specific tyrosine residue of GlnA, thus reducing its activity. Conversely, when nitrogen levels are low, the N-terminal adenylyl removase (AR) activates GlnA by removing the adenylyl group by phosphorolysis, increasing its activity. The regulatory region of GlnE binds the signal transduction protein PII (GlnB) which indicates the nitrogen status of the cell. This chain is Bifunctional glutamine synthetase adenylyltransferase/adenylyl-removing enzyme, found in Mycolicibacterium paratuberculosis (strain ATCC BAA-968 / K-10) (Mycobacterium paratuberculosis).